Reading from the N-terminus, the 130-residue chain is MDFWKFFPFLALSTIWVLCLASSLQAAPFRSALESSLDLGTLGDQEKHLLLAALMQDYEQMKARKLEQEEQETKGSRVTAQKRSCNTATCVTHRLADLLSRSGGVLKDNFVPTDVGSEAFGRRRRRDLQA.

A signal peptide spans 1 to 26 (MDFWKFFPFLALSTIWVLCLASSLQA). Positions 27–82 (APFRSALESSLDLGTLGDQEKHLLLAALMQDYEQMKARKLEQEEQETKGSRVTAQK) are excised as a propeptide. A disulfide bridge connects residues C85 and C90. At F120 the chain carries Phenylalanine amide. Positions 127 to 130 (DLQA) are excised as a propeptide.

Belongs to the calcitonin family. As to expression, detected in nerve cells of cerebrum, hippocampus and pons/midbrain in newborns, and only in nerve cells of pons/midbrain in adult.

The protein localises to the secreted. Functionally, CALCB/CGRP2 is a peptide hormone that induces vasodilation mediated by the CALCRL-RAMP1 receptor complex. Dilates a variety of vessels including the coronary, cerebral and systemic vasculature. Its abundance in the CNS also points toward a neurotransmitter or neuromodulator role. In Mus musculus (Mouse), this protein is Calcitonin gene-related peptide 2.